A 365-amino-acid chain; its full sequence is Delta(7)-sterol 5(6)-desaturase ERG3 (365 aa).

The Cytoplasmic segment spans residues 1–92 (MDLVLEVADH…LLPRSSILRE (92 aa)). Residues 93–113 (FLSLWVIVTIFGLLLYLFTAS) traverse the membrane as a helical segment. At 114 to 140 (LSYVFVFDKSIFNHPRYLKNQMAMEIK) the chain is on the lumenal side. A helical transmembrane segment spans residues 141–161 (LAVSAIPWMSMLTVPWFVMEL). At 162–242 (NGHSKLYMKI…VDGFLQSISY (81 aa)) the chain is on the cytoplasmic side. A Fatty acid hydroxylase domain is found at 187-311 (TFIFFTDCGV…FTTLWDRLGG (125 aa)). The Histidine box-1 motif lies at 200–204 (HRWLH). The Histidine box-2 signature appears at 213-217 (HKPHH). Residues 243–263 (HIYPLILPLHKVSYLILFTFV) form a helical membrane-spanning segment. The Lumenal segment spans residues 264 to 365 (NFWTVMIHDG…ENDPNTKKNN (102 aa)). Residues 288–292 (HTVHH) carry the Histidine box-3 motif. Glycyl lysine isopeptide (Lys-Gly) (interchain with G-Cter in ubiquitin) cross-links involve residues K324 and K344.

It belongs to the sterol desaturase family. Interacts with ERG28. The cofactor is Fe cation.

It is found in the endoplasmic reticulum membrane. The enzyme catalyses episterol + 2 Fe(II)-[cytochrome b5] + O2 + 2 H(+) = 5-dehydroepisterol + 2 Fe(III)-[cytochrome b5] + 2 H2O. Its pathway is steroid metabolism; ergosterol biosynthesis; ergosterol from zymosterol: step 3/5. Its function is as follows. C-5 sterol desaturase; part of the third module of ergosterol biosynthesis pathway that includes the late steps of the pathway. ERG3 catalyzes the introduction of a C-5 double bond in the B ring to produce 5-dehydroepisterol. The third module or late pathway involves the ergosterol synthesis itself through consecutive reactions that mainly occur in the endoplasmic reticulum (ER) membrane. Firstly, the squalene synthase ERG9 catalyzes the condensation of 2 farnesyl pyrophosphate moieties to form squalene, which is the precursor of all steroids. Squalene synthase is crucial for balancing the incorporation of farnesyl diphosphate (FPP) into sterol and nonsterol isoprene synthesis. Secondly, the squalene epoxidase ERG1 catalyzes the stereospecific oxidation of squalene to (S)-2,3-epoxysqualene, which is considered to be a rate-limiting enzyme in steroid biosynthesis. Then, the lanosterol synthase ERG7 catalyzes the cyclization of (S)-2,3 oxidosqualene to lanosterol, a reaction that forms the sterol core. In the next steps, lanosterol is transformed to zymosterol through a complex process involving various demethylation, reduction and desaturation reactions. The lanosterol 14-alpha-demethylase ERG11 (also known as CYP51) catalyzes C14-demethylation of lanosterol to produce 4,4'-dimethyl cholesta-8,14,24-triene-3-beta-ol, which is critical for ergosterol biosynthesis. The C-14 reductase ERG24 reduces the C14=C15 double bond of 4,4-dimethyl-cholesta-8,14,24-trienol to produce 4,4-dimethyl-cholesta-8,24-dienol. 4,4-dimethyl-cholesta-8,24-dienol is substrate of the C-4 demethylation complex ERG25-ERG26-ERG27 in which ERG25 catalyzes the three-step monooxygenation required for the demethylation of 4,4-dimethyl and 4alpha-methylsterols, ERG26 catalyzes the oxidative decarboxylation that results in a reduction of the 3-beta-hydroxy group at the C-3 carbon to an oxo group, and ERG27 is responsible for the reduction of the keto group on the C-3. ERG28 has a role as a scaffold to help anchor ERG25, ERG26 and ERG27 to the endoplasmic reticulum and ERG29 regulates the activity of the iron-containing C4-methylsterol oxidase ERG25. Then, the sterol 24-C-methyltransferase ERG6 catalyzes the methyl transfer from S-adenosyl-methionine to the C-24 of zymosterol to form fecosterol. The C-8 sterol isomerase ERG2 catalyzes the reaction which results in unsaturation at C-7 in the B ring of sterols and thus converts fecosterol to episterol. The sterol-C5-desaturase ERG3 then catalyzes the introduction of a C-5 double bond in the B ring to produce 5-dehydroepisterol. The C-22 sterol desaturase ERG5 further converts 5-dehydroepisterol into ergosta-5,7,22,24(28)-tetraen-3beta-ol by forming the C-22(23) double bond in the sterol side chain. Finally, ergosta-5,7,22,24(28)-tetraen-3beta-ol is substrate of the C-24(28) sterol reductase ERG4 to produce ergosterol. In Saccharomyces cerevisiae (strain ATCC 204508 / S288c) (Baker's yeast), this protein is Delta(7)-sterol 5(6)-desaturase ERG3.